A 115-amino-acid polypeptide reads, in one-letter code: Ribonuclease P protein component (115 aa).

Belongs to the RnpA family. In terms of assembly, consists of a catalytic RNA component (M1 or rnpB) and a protein subunit.

The catalysed reaction is Endonucleolytic cleavage of RNA, removing 5'-extranucleotides from tRNA precursor.. In terms of biological role, RNaseP catalyzes the removal of the 5'-leader sequence from pre-tRNA to produce the mature 5'-terminus. It can also cleave other RNA substrates such as 4.5S RNA. The protein component plays an auxiliary but essential role in vivo by binding to the 5'-leader sequence and broadening the substrate specificity of the ribozyme. The chain is Ribonuclease P protein component from Blochmanniella pennsylvanica (strain BPEN).